A 462-amino-acid chain; its full sequence is Argininosuccinate lyase (462 aa).

This sequence belongs to the lyase 1 family. Argininosuccinate lyase subfamily.

Its subcellular location is the cytoplasm. It carries out the reaction 2-(N(omega)-L-arginino)succinate = fumarate + L-arginine. It participates in amino-acid biosynthesis; L-arginine biosynthesis; L-arginine from L-ornithine and carbamoyl phosphate: step 3/3. This Caldicellulosiruptor saccharolyticus (strain ATCC 43494 / DSM 8903 / Tp8T 6331) protein is Argininosuccinate lyase.